Consider the following 587-residue polypeptide: Arginine--tRNA ligase (587 aa).

Positions 126 to 136 (ANPTGPLHVGH) match the 'HIGH' region motif.

This sequence belongs to the class-I aminoacyl-tRNA synthetase family. Monomer.

It localises to the cytoplasm. The catalysed reaction is tRNA(Arg) + L-arginine + ATP = L-arginyl-tRNA(Arg) + AMP + diphosphate. The protein is Arginine--tRNA ligase of Aromatoleum aromaticum (strain DSM 19018 / LMG 30748 / EbN1) (Azoarcus sp. (strain EbN1)).